Here is a 484-residue protein sequence, read N- to C-terminus: Glycogen synthase (484 aa).

Lys15 lines the ADP-alpha-D-glucose pocket.

This sequence belongs to the glycosyltransferase 1 family. Bacterial/plant glycogen synthase subfamily.

It carries out the reaction [(1-&gt;4)-alpha-D-glucosyl](n) + ADP-alpha-D-glucose = [(1-&gt;4)-alpha-D-glucosyl](n+1) + ADP + H(+). The protein operates within glycan biosynthesis; glycogen biosynthesis. Synthesizes alpha-1,4-glucan chains using ADP-glucose. In Bacillus subtilis (strain 168), this protein is Glycogen synthase (glgA).